We begin with the raw amino-acid sequence, 137 residues long: Large ribosomal subunit protein uL16 (137 aa).

It belongs to the universal ribosomal protein uL16 family. Part of the 50S ribosomal subunit.

In terms of biological role, binds 23S rRNA and is also seen to make contacts with the A and possibly P site tRNAs. The sequence is that of Large ribosomal subunit protein uL16 from Xanthomonas axonopodis pv. citri (strain 306).